We begin with the raw amino-acid sequence, 370 residues long: Protein RecA (370 aa).

The interval 1–20 (MSFEERRKKDSKESSSKEKD) is disordered. 78 to 85 (GPESSGKT) is an ATP binding site.

It belongs to the RecA family.

It is found in the cytoplasm. In terms of biological role, can catalyze the hydrolysis of ATP in the presence of single-stranded DNA, the ATP-dependent uptake of single-stranded DNA by duplex DNA, and the ATP-dependent hybridization of homologous single-stranded DNAs. It interacts with LexA causing its activation and leading to its autocatalytic cleavage. The protein is Protein RecA of Prochlorococcus marinus (strain MIT 9515).